The primary structure comprises 174 residues: Crossover junction endodeoxyribonuclease RuvC (174 aa).

Active-site residues include Asp-8, Glu-67, and Asp-139. The Mg(2+) site is built by Asp-8, Glu-67, and Asp-139.

It belongs to the RuvC family. Homodimer which binds Holliday junction (HJ) DNA. The HJ becomes 2-fold symmetrical on binding to RuvC with unstacked arms; it has a different conformation from HJ DNA in complex with RuvA. In the full resolvosome a probable DNA-RuvA(4)-RuvB(12)-RuvC(2) complex forms which resolves the HJ. Mg(2+) is required as a cofactor.

The protein resides in the cytoplasm. The catalysed reaction is Endonucleolytic cleavage at a junction such as a reciprocal single-stranded crossover between two homologous DNA duplexes (Holliday junction).. Functionally, the RuvA-RuvB-RuvC complex processes Holliday junction (HJ) DNA during genetic recombination and DNA repair. Endonuclease that resolves HJ intermediates. Cleaves cruciform DNA by making single-stranded nicks across the HJ at symmetrical positions within the homologous arms, yielding a 5'-phosphate and a 3'-hydroxyl group; requires a central core of homology in the junction. The consensus cleavage sequence is 5'-(A/T)TT(C/G)-3'. Cleavage occurs on the 3'-side of the TT dinucleotide at the point of strand exchange. HJ branch migration catalyzed by RuvA-RuvB allows RuvC to scan DNA until it finds its consensus sequence, where it cleaves and resolves the cruciform DNA. This chain is Crossover junction endodeoxyribonuclease RuvC, found in Pseudomonas fluorescens (strain ATCC BAA-477 / NRRL B-23932 / Pf-5).